The sequence spans 75 residues: SADEQKLRERFEALDKDKSGTLSVDELYEGVHAVHPKVSRNDIVKIIEKVDTNKDGQVSWQEFIEAFKRLADLKL.

N-acetylserine is present on Ser-1. EF-hand domains lie at 2–37 (ADEQ…VHPK) and 38–73 (VSRN…LADL). The Ca(2+) site is built by Asp-15, Asp-17, Ser-19, Thr-21, Glu-26, Asp-51, Asn-53, Asp-55, Gln-57, and Glu-62.

As to quaternary structure, monomer and homodimer. In terms of tissue distribution, liver, and to a much lower level intestine.

Functionally, binds both calcium and copper, but not zinc. May be involved in calcium signal transduction. This Lepidosiren paradoxus (South American lungfish) protein is Calhepatin.